We begin with the raw amino-acid sequence, 1712 residues long: Latent-transforming growth factor beta-binding protein 1 (1712 aa).

The N-terminal stretch at 1 to 20 is a signal peptide; that stretch reads MAGAWLRWGLLLWAGLLAWS. The segment at 63 to 148 is disordered; the sequence is SSTATSSRSL…QDTQSSGGSR (86 aa). Positions 136–147 are enriched in polar residues; that stretch reads KVQQDTQSSGGS. Positions 181–213 constitute an EGF-like 1 domain; it reads TKPSCVPPCQNGGMCLRPQFCVCKPGTKGKACE. 3 disulfides stabilise this stretch: Cys-185–Cys-195, Cys-189–Cys-201, and Cys-203–Cys-212. N-linked (GlcNAc...) asparagine glycans are attached at residues Asn-339 and Asn-370. The EGF-like 2 domain occupies 391–423; that stretch reads RVVICHLPCMNGGQCSSRDKCQCPPNFTGKLCQ. Cystine bridges form between Cys-395/Cys-405, Cys-399/Cys-411, Cys-413/Cys-422, Cys-551/Cys-573, Cys-560/Cys-586, and Cys-574/Cys-589. N-linked (GlcNAc...) asparagine glycosylation occurs at Asn-416. Residues 549 to 601 enclose the TB 1 domain; that stretch reads GRCFQETIGSQCGKALPGLSKQEDCCGTVGTSWGFNKCQKCPKKQSYHGYTQM. The N-linked (GlcNAc...) asparagine glycan is linked to Asn-612. The EGF-like 3; calcium-binding domain occupies 618–658; it reads DINECQLQGVCPNGECLNTMGSYRCSCKMGFGPDPTFSSCV. 7 disulfide bridges follow: Cys-622–Cys-633, Cys-628–Cys-642, Cys-644–Cys-657, Cys-671–Cys-694, Cys-681–Cys-706, Cys-695–Cys-709, and Cys-696–Cys-721. Ser-639 is a glycosylation site (O-linked (Glc) serine). A TB 2 domain is found at 669-721; sequence GPCYRLVSPGRQCMHPLSVHLTKQICCCSVGKAWGPQCEKCPLPGTAAFKEIC. Residues 752–803 are disordered; it reads KNTQPVAKSTHPPPLPAKEEPVEALTSSREHGPGVAEPEVVTAPPEKEIPSL. Thr-761 and Thr-793 each carry an O-linked (GalNAc...) threonine glycan. Residues 865–906 enclose the EGF-like 4; calcium-binding domain; it reads EINECTVNPDICGAGHCINLPVRYTCICYEGYKFSEQQRKCI. 37 cysteine pairs are disulfide-bonded: Cys-869–Cys-881, Cys-876–Cys-890, Cys-892–Cys-905, Cys-911–Cys-923, Cys-918–Cys-932, Cys-934–Cys-947, Cys-953–Cys-964, Cys-959–Cys-973, Cys-976–Cys-988, Cys-994–Cys-1005, Cys-1000–Cys-1014, Cys-1017–Cys-1028, Cys-1034–Cys-1045, Cys-1040–Cys-1054, Cys-1056–Cys-1069, Cys-1075–Cys-1086, Cys-1081–Cys-1095, Cys-1097–Cys-1110, Cys-1116–Cys-1127, Cys-1122–Cys-1136, Cys-1138–Cys-1151, Cys-1157–Cys-1169, Cys-1164–Cys-1178, Cys-1180–Cys-1192, Cys-1198–Cys-1210, Cys-1204–Cys-1219, Cys-1221–Cys-1234, Cys-1240–Cys-1252, Cys-1246–Cys-1261, Cys-1263–Cys-1276, Cys-1282–Cys-1294, Cys-1289–Cys-1303, Cys-1305–Cys-1319, Cys-1340–Cys-1363, Cys-1350–Cys-1375, Cys-1364–Cys-1380, and Cys-1365–Cys-1392. An EGF-like 5; calcium-binding domain is found at 907–948; sequence DIDECAQAQHLCSQGRCENTEGSFLCICPAGFIASEEGSNCI. The O-linked (Glc) serine glycan is linked to Ser-929. The region spanning 949-989 is the EGF-like 6; calcium-binding domain; that stretch reads DVDECLRPDVCRDGRCINTAGAFRCEYCDSGYRMSRRGHCE. At Asn-966 the chain carries (3R)-3-hydroxyasparagine. Residues 990 to 1029 enclose the EGF-like 7; calcium-binding domain; that stretch reads DIDECLTPSTCPEEQCVNSPGSYQCVPCTEGFRGWNGQCL. O-linked (Glc) serine glycosylation occurs at Ser-1011. One can recognise an EGF-like 8; calcium-binding domain in the interval 1030–1070; it reads DVDECLQPKVCTNGSCTNLEGSYMCSCHKGYSPTPDHRHCQ. Asn-1042 is a glycosylation site (N-linked (GlcNAc...) asparagine). Ser-1051 carries an O-linked (Glc) serine glycan. In terms of domain architecture, EGF-like 9; calcium-binding spans 1071–1111; the sequence is DIDECQQGNLCMNGQCKNTDGSFRCTCGQGYQLSAAKDQCE. The EGF-like 10; calcium-binding domain maps to 1112 to 1152; sequence DIDECEHRHLCSHGQCRNTEGSFQCLCNQGYRASVLGDHCE. Position 1129 is a (3R)-3-hydroxyasparagine (Asn-1129). Ser-1133 is a glycosylation site (O-linked (Glc) serine). Positions 1153 to 1193 constitute an EGF-like 11; calcium-binding domain; sequence DINECLEDSSVCQGGDCINTAGSYDCTCPDGLQLNDNKGCQ. The 42-residue stretch at 1194 to 1235 folds into the EGF-like 12; calcium-binding domain; it reads DINECAQPGLCAPHGECLNTQGSFHCVCEQGFSISADGRTCE. O-linked (Glc) serine glycosylation is present at Ser-1216. Residues 1236 to 1277 form the EGF-like 13; calcium-binding domain; the sequence is DIDECVNNTVCDSHGFCDNTAGSFRCLCYQGFQAPQDGQGCV. Residue Asn-1242 is glycosylated (N-linked (GlcNAc...) asparagine). The EGF-like 14; calcium-binding domain occupies 1278–1320; the sequence is DVNECELLSGVCGEAFCENVEGSFLCVCADENQEYSPMTGQCR. The interval 1335–1402 is 8-Cys3 region; sequence EEKKECYYNL…PRGKGFVPAG (68 aa). Residues 1338 to 1392 enclose the TB 3 domain; it reads KECYYNLNDASLCDNVLAPNVTKQECCCTSGAGWGDNCEIFPCPVQGTAEFSEMC. Asn-1357 is a glycosylation site (N-linked (GlcNAc...) asparagine). Ser-1405 is subject to Phosphoserine. An EGF-like 15; calcium-binding domain is found at 1415–1457; it reads DADECLLFGEEICKNGYCLNTQPGYECYCKEGTYYDPVKLQCF. 10 disulfide bridges follow: Cys-1419/Cys-1432, Cys-1427/Cys-1441, Cys-1443/Cys-1456, Cys-1462/Cys-1473, Cys-1468/Cys-1482, Cys-1484/Cys-1497, Cys-1517/Cys-1541, Cys-1527/Cys-1553, Cys-1542/Cys-1556, and Cys-1543/Cys-1568. The region spanning 1458 to 1498 is the EGF-like 16; calcium-binding domain; sequence DMDECQDPNSCIDGQCVNTEGSYNCFCTHPMVLDASEKRCV. Ser-1479 carries O-linked (Glc) serine glycosylation. A C-terminal domain region spans residues 1498 to 1712; that stretch reads VQPTESNEQI…LNLDKDSDLE (215 aa). Positions 1515–1568 constitute a TB 4 domain; it reads DLCWEHLSEEYVCSRPLVGKQTTYTECCCLYGEAWGMQCALCPMKDSDDYAQLC. Ser-1588 and Ser-1607 each carry phosphoserine. The EGF-like 17 domain maps to 1612–1652; sequence QAEECGILNGCENGRCVRVQEGYTCDCFDGYHLDMAKMTCV. 6 disulfides stabilise this stretch: Cys-1616-Cys-1627, Cys-1622-Cys-1636, Cys-1638-Cys-1651, Cys-1657-Cys-1672, Cys-1667-Cys-1681, and Cys-1683-Cys-1696. The 45-residue stretch at 1653–1697 folds into the EGF-like 18; calcium-binding domain; the sequence is DVNECSELNNRMSLCKNAKCINTEGSYKCVCLPGYVPSDKPNYCT. Ser-1678 is a glycosylation site (O-linked (Glc) serine).

The protein belongs to the LTBP family. In terms of assembly, interacts with TGFB1; associates via disulfide bonds with the Latency-associated peptide chain (LAP) regulatory chain of TGFB1, leading to regulate activation of TGF-beta-1. LTBP1 does not bind directly to TGF-beta-1, the active chain of TGFB1. Interacts (via C-terminal domain) with FBN1 (via N-terminal domain). Interacts with FBN2. Interacts with ADAMTSL2. Interacts with EFEMP2. In terms of processing, contains hydroxylated asparagine residues. Two intrachain disulfide bonds from the TB3 domain are rearranged upon TGFB1 binding, and form interchain bonds with TGFB1 propeptide, anchoring it to the extracellular matrix. Post-translationally, O-glycosylated on serine residues by POGLUT2 and POGLUT3.

The protein resides in the secreted. It is found in the extracellular space. The protein localises to the extracellular matrix. Functionally, key regulator of transforming growth factor beta (TGFB1, TGFB2 and TGFB3) that controls TGF-beta activation by maintaining it in a latent state during storage in extracellular space. Associates specifically via disulfide bonds with the Latency-associated peptide (LAP), which is the regulatory chain of TGF-beta, and regulates integrin-dependent activation of TGF-beta. Outcompeted by LRRC32/GARP for binding to LAP regulatory chain of TGF-beta. The chain is Latent-transforming growth factor beta-binding protein 1 (Ltbp1) from Rattus norvegicus (Rat).